A 149-amino-acid polypeptide reads, in one-letter code: Calmodulin-2 (149 aa).

EF-hand domains follow at residues 8–43 (DQISEFKEAFSLFDKDGDGCITTKELGTVMRSLGQN), 44–79 (PTEAELQDMINEVDADGNGTIDFPEFLNLMARKMKD), 81–116 (DSEEELKEAFRVFDKDQNGFISAAELRHVMTNLGEK), and 117–149 (LTDEEVDEMIKEADVDGDGQINYEEFVKVMMAK). Residues aspartate 21, aspartate 23, aspartate 25, cysteine 27, glutamate 32, aspartate 57, aspartate 59, asparagine 61, threonine 63, glutamate 68, aspartate 94, aspartate 96, asparagine 98, glutamate 105, aspartate 130, aspartate 132, aspartate 134, glutamine 136, and glutamate 141 each contribute to the Ca(2+) site.

Belongs to the calmodulin family. In terms of assembly, interacts with KCBP and CIP111. Binds to IQD1 and IQD20.

It is found in the cytoplasm. Its subcellular location is the cytoskeleton. Calmodulin mediates the control of a large number of enzymes, ion channels and other proteins by Ca(2+). Among the enzymes to be stimulated by the calmodulin-Ca(2+) complex are a number of protein kinases and phosphatases. This chain is Calmodulin-2 (CAM2), found in Arabidopsis thaliana (Mouse-ear cress).